The following is a 359-amino-acid chain: MDLMSFKEKELSKKDCVELFEDTENFFDILKLADSLRKDIVGDTVTYVVNANINFTNVCSGTCKFCAFKAEHGDPNAFFLSPEQVAKKALEARKTGATEVCIQGGLLKEIDTYFQAEILKKVKEITKTYGGIDVHAFSPMEVKSAAENAGLSVKEALKILKENGLNSMPGTAAEILDDEVRSEICPTKLKTSEWIDVVSTAHKTGINTTCTMMYGHIEENKHLAEHLSILRKIQKETGGFTEFVPLTFLHENAPLHHMDRVKSGASGMLDLKVYAISRIFFKDYIKNIQTSWVKLGTKLSQISLNCGANDIGGTLMEESISKAAGGSYGTYMSEEKLKDMVLAVGRIPKQRNTCYEIIE.

Residues 45–282 (VTYVVNANIN…VYAISRIFFK (238 aa)) form the Radical SAM core domain. [4Fe-4S] cluster is bound by residues Cys59, Cys63, and Cys66.

The protein belongs to the radical SAM superfamily. CofH family. In terms of assembly, consists of two subunits, CofG and CofH. [4Fe-4S] cluster serves as cofactor.

It carries out the reaction 5-amino-6-(D-ribitylamino)uracil + L-tyrosine + S-adenosyl-L-methionine = 5-amino-5-(4-hydroxybenzyl)-6-(D-ribitylimino)-5,6-dihydrouracil + 2-iminoacetate + 5'-deoxyadenosine + L-methionine + H(+). Its pathway is cofactor biosynthesis; coenzyme F0 biosynthesis. Its function is as follows. Catalyzes the radical-mediated synthesis of 5-amino-5-(4-hydroxybenzyl)-6-(D-ribitylimino)-5,6-dihydrouracil from 5-amino-6-(D-ribitylamino)uracil and L-tyrosine. This chain is 5-amino-6-(D-ribitylamino)uracil--L-tyrosine 4-hydroxyphenyl transferase 1, found in Methanococcus maripaludis (strain DSM 14266 / JCM 13030 / NBRC 101832 / S2 / LL).